The following is a 148-amino-acid chain: Large-conductance mechanosensitive channel (148 aa).

Transmembrane regions (helical) follow at residues 16–36 and 89–109; these read VMDLAVGVIIGGAFSTIVNSI and GSFITVLINFLILAFIIFLMV.

The protein belongs to the MscL family. As to quaternary structure, homopentamer.

It is found in the cell inner membrane. Channel that opens in response to stretch forces in the membrane lipid bilayer. May participate in the regulation of osmotic pressure changes within the cell. In Paraburkholderia phytofirmans (strain DSM 17436 / LMG 22146 / PsJN) (Burkholderia phytofirmans), this protein is Large-conductance mechanosensitive channel.